We begin with the raw amino-acid sequence, 438 residues long: UPF0229 protein R01398 (438 aa).

The disordered stretch occupies residues 55 to 107 (PARGVNEPAFQPDSNSGERRHVLPGNREFAAGDRIPKRGSGGGAGNAGAGTGQ). The span at 93-105 (GSGGGAGNAGAGT) shows a compositional bias: gly residues.

This sequence belongs to the UPF0229 family.

The sequence is that of UPF0229 protein R01398 from Rhizobium meliloti (strain 1021) (Ensifer meliloti).